The primary structure comprises 117 residues: Regulator of ribonuclease activity B (117 aa).

This sequence belongs to the RraB family. In terms of assembly, interacts with the C-terminal region of Rne.

It localises to the cytoplasm. Globally modulates RNA abundance by binding to RNase E (Rne) and regulating its endonucleolytic activity. Can modulate Rne action in a substrate-dependent manner by altering the composition of the degradosome. The sequence is that of Regulator of ribonuclease activity B from Pseudoalteromonas atlantica (strain T6c / ATCC BAA-1087).